The following is a 347-amino-acid chain: Rhodopsin (347 aa).

Residues 1-33 (TEGPDFYIPMVNTTGVVRSPYEYPQYYLVNPAA) lie on the Extracellular side of the membrane. Asn-12 is a glycosylation site (N-linked (GlcNAc...) asparagine). The helical transmembrane segment at 34-58 (FAVLGAYMFFLIIIGFPINFLTLYV) threads the bilayer. Over 59–70 (TLEHKKLRTPLN) the chain is Cytoplasmic. The chain crosses the membrane as a helical span at residues 71–93 (YILLNLAVADLFMVIGGFTTTMY). At 94–107 (SSMHGYFVLGRLGC) the chain is on the extracellular side. The cysteines at positions 107 and 184 are disulfide-linked. Residues 108–130 (NIEGFFATLGGMISLWSLAVLAI) form a helical membrane-spanning segment. The short motif at 131 to 133 (ERW) is the 'Ionic lock' involved in activated form stabilization element. Residues 131 to 149 (ERWVVVCKPISNFRFGENH) lie on the Cytoplasmic side of the membrane. A helical transmembrane segment spans residues 150-170 (AIMGVSLTWVMALACTVPPLV). The Extracellular segment spans residues 171 to 199 (GWSRYIPEGMQCACGIDYYTRAEGYNNES). N-linked (GlcNAc...) asparagine glycosylation occurs at Asn-197. The chain crosses the membrane as a helical span at residues 200-221 (FVIYMFTFHFLFPMFIIFFCYG). Residues 222-249 (RLLCAVKEAAAAQQESETTQRAEREVTR) are Cytoplasmic-facing. Residues 250 to 271 (MVILMVIGYLVCWLPYASVAWF) form a helical membrane-spanning segment. The Extracellular segment spans residues 272–283 (IFTHKGSEFGPL). Residues 284 to 305 (FMAVPSFFAKSSSIYNPIIYIC) traverse the membrane as a helical segment. Residue Lys-293 is modified to N6-(retinylidene)lysine. At 306 to 347 (MNKQFRQCMITTLFCGKNPFEGQEEDSSTKTEASSASSVSPA) the chain is on the cytoplasmic side. Residue Cys-320 is the site of S-palmitoyl cysteine attachment. A disordered region spans residues 326-347 (EGQEEDSSTKTEASSASSVSPA). Low complexity predominate over residues 335 to 347 (KTEASSASSVSPA).

The protein belongs to the G-protein coupled receptor 1 family. Opsin subfamily. Phosphorylated on some or all of the serine and threonine residues present in the C-terminal region. In terms of processing, contains one covalently linked retinal chromophore.

The protein localises to the membrane. It is found in the cell projection. Its subcellular location is the cilium. The protein resides in the photoreceptor outer segment. Functionally, photoreceptor required for image-forming vision at low light intensity. While most salt water fish species use retinal as chromophore, most freshwater fish use 3-dehydroretinal, or a mixture of retinal and 3-dehydroretinal. Light-induced isomerization of 11-cis to all-trans retinal triggers a conformational change that activates signaling via G-proteins. Subsequent receptor phosphorylation mediates displacement of the bound G-protein alpha subunit by arrestin and terminates signaling. This Sargocentron tiere (Blue lined squirrelfish) protein is Rhodopsin (rho).